We begin with the raw amino-acid sequence, 219 residues long: Ras-like protein 1 (219 aa).

15–22 (GDGGVGKS) serves as a coordination point for GTP. The short motif at 37–45 (YDPTIEDSY) is the Effector region element. GTP-binding positions include 62–66 (DTAGQ) and 121–124 (NKCD). The residue at position 216 (cysteine 216) is a Cysteine methyl ester. The S-farnesyl cysteine moiety is linked to residue cysteine 216. The propeptide at 217–219 (VIC) is removed in mature form.

This sequence belongs to the small GTPase superfamily. Ras family. As to quaternary structure, scd1, scd2, cdc42, and ras1, in its GTP-bound state, act cooperatively to form a protein complex. Post-translationally, palmitoylated by the erf2-erf4 complex.

The protein resides in the cell membrane. It catalyses the reaction GTP + H2O = GDP + phosphate + H(+). Alternates between an inactive form bound to GDP and an active form bound to GTP. Activated by a guanine nucleotide-exchange factor (GEF) and inactivated by a GTPase-activating protein (GAP). Its function is as follows. Participates in the process of sexual differentiation and the determination of cell shape. Essential for mating and for recognition of the mating pheromone, but not for vegetative growth. Does not regulate the intracellular cAMP level. Regulates two downstream pathways, namely the byr2/byr1/spk1 mitogen-activated protein kinase cascade and the cdc42 small G protein pathway. The former is relevant to mating and sporulation, whereas the latter is relevant to mating, cell growth and cell morphology. The sequence is that of Ras-like protein 1 (ras1) from Schizosaccharomyces pombe (strain 972 / ATCC 24843) (Fission yeast).